We begin with the raw amino-acid sequence, 274 residues long: Large ribosomal subunit protein uL2 (274 aa).

Disordered regions lie at residues 34–54 (LEKK…TRHI) and 224–261 (VAMN…KTRA).

Belongs to the universal ribosomal protein uL2 family. As to quaternary structure, part of the 50S ribosomal subunit. Forms a bridge to the 30S subunit in the 70S ribosome.

In terms of biological role, one of the primary rRNA binding proteins. Required for association of the 30S and 50S subunits to form the 70S ribosome, for tRNA binding and peptide bond formation. It has been suggested to have peptidyltransferase activity; this is somewhat controversial. Makes several contacts with the 16S rRNA in the 70S ribosome. The chain is Large ribosomal subunit protein uL2 from Ectopseudomonas mendocina (strain ymp) (Pseudomonas mendocina).